A 367-amino-acid polypeptide reads, in one-letter code: UDP-N-acetylglucosamine--N-acetylmuramyl-(pentapeptide) pyrophosphoryl-undecaprenol N-acetylglucosamine transferase (367 aa).

UDP-N-acetyl-alpha-D-glucosamine contacts are provided by residues 22–24 (TGG), Asn-134, Arg-170, Ser-198, Ile-253, and Gln-298.

The protein belongs to the glycosyltransferase 28 family. MurG subfamily.

Its subcellular location is the cell inner membrane. The catalysed reaction is di-trans,octa-cis-undecaprenyl diphospho-N-acetyl-alpha-D-muramoyl-L-alanyl-D-glutamyl-meso-2,6-diaminopimeloyl-D-alanyl-D-alanine + UDP-N-acetyl-alpha-D-glucosamine = di-trans,octa-cis-undecaprenyl diphospho-[N-acetyl-alpha-D-glucosaminyl-(1-&gt;4)]-N-acetyl-alpha-D-muramoyl-L-alanyl-D-glutamyl-meso-2,6-diaminopimeloyl-D-alanyl-D-alanine + UDP + H(+). It participates in cell wall biogenesis; peptidoglycan biosynthesis. In terms of biological role, cell wall formation. Catalyzes the transfer of a GlcNAc subunit on undecaprenyl-pyrophosphoryl-MurNAc-pentapeptide (lipid intermediate I) to form undecaprenyl-pyrophosphoryl-MurNAc-(pentapeptide)GlcNAc (lipid intermediate II). The chain is UDP-N-acetylglucosamine--N-acetylmuramyl-(pentapeptide) pyrophosphoryl-undecaprenol N-acetylglucosamine transferase from Xylella fastidiosa (strain M23).